The primary structure comprises 333 residues: Trans-enoyl reductase apdC (333 aa).

45–48 (FDAK) contacts NADP(+). 131–138 (VGLATVGM) lines the substrate pocket. NADP(+) is bound by residues 167–170 (SPHN), Tyr-185, and 232–233 (LD). Substrate is bound at residue 252-256 (SVTMY). Residue 321–322 (VS) participates in NADP(+) binding.

The protein belongs to the zinc-containing alcohol dehydrogenase family. As to quaternary structure, monomer.

Its pathway is secondary metabolite biosynthesis. Its function is as follows. Trans-enoyl reductase; part of the gene cluster that mediates the biosynthesis of aspyridones. The polyketide-amino acid backbone preaspyridone A is first assembled by the PKS-NRPS hybrid apdA. The assembly of preaspyridone A is initiated by loading of malonyl-CoA onto apdA, followed by decarboxylation to yield the acetyl starter unit. The growing polyketide chain then elongates into a tetraketide. The adpA PKS module catalyzes three Claisen condensations, as well as beta-keto processing and methylation. Alpha-methylation step during polyketide synthesis is a prerequisite and a key checkpoint for chain transfer between PKS and NRPS modules. The downstream NRPS module contains the condensation (C), adenylation (A), and thiolation (T) domains and catalyzes the incorporation of tyrosine via the formation of the L-tyrosinyl-thioester and the amide linkage between L-tyrosinyl-thioester and the tetraketide. The bimodular assembly line is terminated with a reductase (R) domain that facilitates formation and release of the tetramic acid product. Because apdA lacks a designated enoylreductase (ER) domain, the required activity is provided the enoyl reductase apdC. ApdC appears to operate with different stereoselectivity in different PKS cycle. Combined with apdC, apdA is proposed to synthesize preaspyridone A via about 20 enzymatic steps. A number of oxidative steps performed successively by the cytochrome P450 monooxygenases apdE and apdB are required for the conversion of preaspyridone A to aspyridone A. The cytochrome P450 monooxygenase apdE is responsible for the oxidative dephenylation of preaspyridone A. Finally, the predicted FAD-dependent monooxygenase apdD and the acyl-CoA dehydrogenase apdG may be involved in the transformation of aspyridone A into aspyridone B. This chain is Trans-enoyl reductase apdC, found in Emericella nidulans (strain FGSC A4 / ATCC 38163 / CBS 112.46 / NRRL 194 / M139) (Aspergillus nidulans).